We begin with the raw amino-acid sequence, 102 residues long: Anti-lipopolysaccharide factor (102 aa).

C32 and C53 are oxidised to a cystine.

Its function is as follows. Binds tightly to LPS and thus specifically inhibits the LPS-mediated activation of the hemolymph coagulation. It has a strong antibacterial effect especially on the growth of Gram-negative bacteria. The chain is Anti-lipopolysaccharide factor from Tachypleus tridentatus (Japanese horseshoe crab).